We begin with the raw amino-acid sequence, 333 residues long: 4-hydroxyproline epimerase (333 aa).

Cys-90 functions as the Proton acceptor in the catalytic mechanism. Substrate contacts are provided by residues 91-92 (GH) and Asp-249. Residue Cys-253 is the Proton donor of the active site. 254-255 (GT) is a substrate binding site.

Belongs to the proline racemase family. In terms of assembly, homodimer.

The enzyme catalyses trans-4-hydroxy-L-proline = cis-4-hydroxy-D-proline. In terms of biological role, allows intracellular utilization of 4-hydroxyproline, one of the major constituents of host collagen, by converting 4-hydroxy-L-proline to 4-hydroxy-D-proline, which can be further metabolized by intracellular 4-hydroxy-D-proline oxidases. Strong B-cell mitogen. Plays an important role in the regulation of intra- and extracellular amino acid pools, allowing the bacterium to profit from host precursors and enzymatic pathways. The polypeptide is 4-hydroxyproline epimerase (Brucella suis (strain ATCC 23445 / NCTC 10510)).